A 717-amino-acid polypeptide reads, in one-letter code: DNA ligase (717 aa).

Residues 44–48 (DAEYD), 93–94 (SL), and glutamate 127 contribute to the NAD(+) site. Lysine 129 (N6-AMP-lysine intermediate) is an active-site residue. NAD(+) contacts are provided by arginine 150, glutamate 186, lysine 302, and lysine 326. The Zn(2+) site is built by cysteine 431, cysteine 434, cysteine 455, and cysteine 461. The region spanning 639 to 717 (TSGSPVVGKT…EDEWLELIGG (79 aa)) is the BRCT domain.

It belongs to the NAD-dependent DNA ligase family. LigA subfamily. Mg(2+) is required as a cofactor. Requires Mn(2+) as cofactor.

It catalyses the reaction NAD(+) + (deoxyribonucleotide)n-3'-hydroxyl + 5'-phospho-(deoxyribonucleotide)m = (deoxyribonucleotide)n+m + AMP + beta-nicotinamide D-nucleotide.. In terms of biological role, DNA ligase that catalyzes the formation of phosphodiester linkages between 5'-phosphoryl and 3'-hydroxyl groups in double-stranded DNA using NAD as a coenzyme and as the energy source for the reaction. It is essential for DNA replication and repair of damaged DNA. This chain is DNA ligase, found in Rhizobium rhizogenes (strain K84 / ATCC BAA-868) (Agrobacterium radiobacter).